The following is a 203-amino-acid chain: MSAIERITKAAHLIDMNDIIREGNPTLRTVAEEVTFPLSDQEIILGEKMMQFLKHSQDPVMAEKMGLRGGVGLAAPQLDISKRIIAVLVPNIVEEGETPQEAYDLEAIMYNPKIVSHSVQDAALGEGEGCLSVDRNVPGYVVRHARVTVDYFDKDGEKHRIKLKGYNSIVVQHEIDHINGIMFYDRINEKDPFAVKDGLLILE.

The Fe cation site is built by Cys-130 and His-173. Residue Glu-174 is part of the active site. His-177 lines the Fe cation pocket.

It belongs to the polypeptide deformylase family. Requires Fe(2+) as cofactor.

The enzyme catalyses N-terminal N-formyl-L-methionyl-[peptide] + H2O = N-terminal L-methionyl-[peptide] + formate. Removes the formyl group from the N-terminal Met of newly synthesized proteins. Requires at least a dipeptide for an efficient rate of reaction. N-terminal L-methionine is a prerequisite for activity but the enzyme has broad specificity at other positions. The chain is Peptide deformylase from Streptococcus pneumoniae serotype 2 (strain D39 / NCTC 7466).